A 188-amino-acid chain; its full sequence is Elongation factor P (188 aa).

This sequence belongs to the elongation factor P family.

The protein localises to the cytoplasm. It participates in protein biosynthesis; polypeptide chain elongation. In terms of biological role, involved in peptide bond synthesis. Stimulates efficient translation and peptide-bond synthesis on native or reconstituted 70S ribosomes in vitro. Probably functions indirectly by altering the affinity of the ribosome for aminoacyl-tRNA, thus increasing their reactivity as acceptors for peptidyl transferase. The sequence is that of Elongation factor P from Flavobacterium johnsoniae (strain ATCC 17061 / DSM 2064 / JCM 8514 / BCRC 14874 / CCUG 350202 / NBRC 14942 / NCIMB 11054 / UW101) (Cytophaga johnsonae).